Reading from the N-terminus, the 287-residue chain is Pantothenate synthetase (287 aa).

30–37 (MGNLHSGH) lines the ATP pocket. The active-site Proton donor is His37. Gln61 serves as a coordination point for (R)-pantoate. Gln61 contributes to the beta-alanine binding site. 149–152 (GEKD) contributes to the ATP binding site. Gln155 lines the (R)-pantoate pocket. ATP is bound by residues Val178 and 186–189 (LSSR).

The protein belongs to the pantothenate synthetase family. In terms of assembly, homodimer.

The protein resides in the cytoplasm. It catalyses the reaction (R)-pantoate + beta-alanine + ATP = (R)-pantothenate + AMP + diphosphate + H(+). The protein operates within cofactor biosynthesis; (R)-pantothenate biosynthesis; (R)-pantothenate from (R)-pantoate and beta-alanine: step 1/1. Functionally, catalyzes the condensation of pantoate with beta-alanine in an ATP-dependent reaction via a pantoyl-adenylate intermediate. The chain is Pantothenate synthetase from Pseudomonas putida (strain GB-1).